A 377-amino-acid polypeptide reads, in one-letter code: UPF0425 pyridoxal phosphate-dependent protein MTH_1914 (377 aa).

Lys207 bears the N6-(pyridoxal phosphate)lysine mark.

The protein belongs to the UPF0425 family. Requires pyridoxal 5'-phosphate as cofactor.

This chain is UPF0425 pyridoxal phosphate-dependent protein MTH_1914, found in Methanothermobacter thermautotrophicus (strain ATCC 29096 / DSM 1053 / JCM 10044 / NBRC 100330 / Delta H) (Methanobacterium thermoautotrophicum).